A 241-amino-acid polypeptide reads, in one-letter code: Non-structural protein 1 (241 aa).

The protein localises to the host cytoplasm. Its subcellular location is the host nucleus. Functionally, suppresses the RNA silencing-based antiviral response in Drosophila cells. The chain is Non-structural protein 1 (NS) from Influenza C virus (strain C/Mississippi/1980).